The chain runs to 180 residues: Cytokinin-beta-glucosidase 1 (180 aa).

Its function is as follows. Hydrolyzes cytokinin glucosides thus liberating free cytokinins. This is Cytokinin-beta-glucosidase 1 (ROLC1) from Linaria vulgaris (Toadflax).